The primary structure comprises 1073 residues: Guanylyl cyclase C (1073 aa).

Residues 1 to 23 (MKTPLLALALWSLLLQLGLTFWP) form the signal peptide. Residues 24–433 (SSVSQNCHNG…IPGRGPQILM (410 aa)) lie on the Extracellular side of the membrane. N-linked (GlcNAc...) asparagine glycosylation is found at N32, N43, N79, N195, N284, N307, and N402. A helical transmembrane segment spans residues 434-454 (IAVFTLTGTIVLLLLIALLVL). At 455-1073 (RKYKREYALR…NTTDNESTHF (619 aa)) the chain is on the cytoplasmic side. The region spanning 489-749 (LKIDDDRRRD…KIENTLAKIF (261 aa)) is the Protein kinase domain. The 131-residue stretch at 824-954 (TIYFSDIVGF…DTVNTASRME (131 aa)) folds into the Guanylate cyclase domain.

This sequence belongs to the adenylyl cyclase class-4/guanylyl cyclase family. In terms of assembly, homotrimer. Interacts via its C-terminal region with NHERF4. Interacts with the lectin chaperone VIP36. Post-translationally, glycosylation at Asn-79 is required for interaction with VIP36 while glycosylation at Asn-402 modulates ligand-mediated GC-C activation.

The protein localises to the cell membrane. It is found in the endoplasmic reticulum membrane. It carries out the reaction GTP = 3',5'-cyclic GMP + diphosphate. Guanylyl cyclase that catalyzes synthesis of cyclic GMP (cGMP) from GTP. The sequence is that of Guanylyl cyclase C (GUCY2C) from Sus scrofa (Pig).